Consider the following 142-residue polypeptide: Large ribosomal subunit protein uL13 (142 aa).

This sequence belongs to the universal ribosomal protein uL13 family. As to quaternary structure, part of the 50S ribosomal subunit.

Its function is as follows. This protein is one of the early assembly proteins of the 50S ribosomal subunit, although it is not seen to bind rRNA by itself. It is important during the early stages of 50S assembly. This Psychrobacter cryohalolentis (strain ATCC BAA-1226 / DSM 17306 / VKM B-2378 / K5) protein is Large ribosomal subunit protein uL13.